Consider the following 248-residue polypeptide: Proteasome subunit alpha (248 aa).

The segment at 229-248 is disordered; sequence LLEADGATTEAESSAEEEDE.

This sequence belongs to the peptidase T1A family. The 20S proteasome core is composed of 14 alpha and 14 beta subunits that assemble into four stacked heptameric rings, resulting in a barrel-shaped structure. The two inner rings, each composed of seven catalytic beta subunits, are sandwiched by two outer rings, each composed of seven alpha subunits. The catalytic chamber with the active sites is on the inside of the barrel. Has a gated structure, the ends of the cylinder being occluded by the N-termini of the alpha-subunits. Is capped by the proteasome-associated ATPase, ARC.

It is found in the cytoplasm. It participates in protein degradation; proteasomal Pup-dependent pathway. With respect to regulation, the formation of the proteasomal ATPase ARC-20S proteasome complex, likely via the docking of the C-termini of ARC into the intersubunit pockets in the alpha-rings, may trigger opening of the gate for substrate entry. Interconversion between the open-gate and close-gate conformations leads to a dynamic regulation of the 20S proteasome proteolysis activity. Its function is as follows. Component of the proteasome core, a large protease complex with broad specificity involved in protein degradation. The sequence is that of Proteasome subunit alpha from Streptomyces scabiei (strain 87.22).